The following is a 98-amino-acid chain: Class II hydrophobin 1 (98 aa).

A signal peptide spans 1–16 (MQFFTTVVLFAAAAMA). Disulfide bonds link Cys-29-Cys-79, Cys-39-Cys-70, Cys-40-Cys-52, and Cys-80-Cys-92.

The protein belongs to the cerato-ulmin hydrophobin family. In terms of assembly, homodimer. Homodimers further self-assemble to form highly ordered films at water-air interfaces through intermolecular interactions. As to expression, expressed in mycelium, conidiating mycelium and aerial hyphae.

It localises to the secreted. The protein resides in the cell wall. Aerial growth, conidiation, and dispersal of filamentous fungi in the environment rely upon a capability of their secreting small amphipathic proteins called hydrophobins (HPBs) with low sequence identity. Class I can self-assemble into an outermost layer of rodlet bundles on aerial cell surfaces, conferring cellular hydrophobicity that supports fungal growth, development and dispersal; whereas Class II form highly ordered films at water-air interfaces through intermolecular interactions but contribute nothing to the rodlet structure. Hyd1 is a class II hydrophobin that plays probably a role during conidiophore development and in intraspecific signaling or hyphal fusion. Hyd1 and Hyd3 are jointly required for conidial hydrophobicity and dispersal, but seem not to be involved in mycelia hydrophobicity. Inhibits conidial germination in environments not suitable for mycelial growth. Not necessary for root adhesion and colonization. The chain is Class II hydrophobin 1 from Bionectria ochroleuca (Gliocladium roseum).